The chain runs to 434 residues: Ribosomal protein uS12 methylthiotransferase RimO (434 aa).

The region spanning 4–122 (NRVDVITLGC…LISHLGKSYY (119 aa)) is the MTTase N-terminal domain. 6 residues coordinate [4Fe-4S] cluster: Cys-13, Cys-51, Cys-85, Cys-146, Cys-150, and Cys-153. Residues 132-363 (TTPRHYAYLK…MAVQERISAA (232 aa)) form the Radical SAM core domain. One can recognise a TRAM domain in the interval 366–434 (EAKIGSRLHV…PFDLYARIVD (69 aa)).

The protein belongs to the methylthiotransferase family. RimO subfamily. [4Fe-4S] cluster serves as cofactor.

The protein localises to the cytoplasm. It catalyses the reaction L-aspartate(89)-[ribosomal protein uS12]-hydrogen + (sulfur carrier)-SH + AH2 + 2 S-adenosyl-L-methionine = 3-methylsulfanyl-L-aspartate(89)-[ribosomal protein uS12]-hydrogen + (sulfur carrier)-H + 5'-deoxyadenosine + L-methionine + A + S-adenosyl-L-homocysteine + 2 H(+). Its function is as follows. Catalyzes the methylthiolation of an aspartic acid residue of ribosomal protein uS12. This Porphyromonas gingivalis (strain ATCC BAA-308 / W83) protein is Ribosomal protein uS12 methylthiotransferase RimO.